The primary structure comprises 528 residues: Biotin carboxylase 1, chloroplastic (528 aa).

The transit peptide at 1–51 directs the protein to the chloroplast; sequence MEATLPVCKSVTSTPGLFMGKTSGIRSSQCSFMMGNKVNFPRQRAQTAHVH. ATP is bound by residues lysine 179, lysine 221, 227 to 228, 263 to 266, and histidine 271; these read GG and EKYV. Residues 183-380 form the ATP-grasp domain; it reads RETMKKAGVP…LIEEQIRVAM (198 aa). Lysine 300 provides a ligand contact to hydrogencarbonate. Residues glutamate 338 and glutamate 351 each coordinate ATP. Residues glutamate 338, glutamate 351, and asparagine 353 each coordinate Mg(2+). Mn(2+) is bound by residues glutamate 338, glutamate 351, and asparagine 353. Positions 355, 358, and 401 each coordinate hydrogencarbonate. Residue arginine 355 is part of the active site. Residue arginine 401 participates in biotin binding.

In terms of assembly, acetyl-CoA carboxylase is a heterohexamer composed of biotin carboxyl carrier protein, biotin carboxylase and two subunits each of ACCase subunit alpha and ACCase plastid-coded subunit beta (accD). The cofactor is Mg(2+). Requires Mn(2+) as cofactor.

It is found in the plastid. The protein resides in the chloroplast. It catalyses the reaction N(6)-biotinyl-L-lysyl-[protein] + hydrogencarbonate + ATP = N(6)-carboxybiotinyl-L-lysyl-[protein] + ADP + phosphate + H(+). It functions in the pathway lipid metabolism; malonyl-CoA biosynthesis; malonyl-CoA from acetyl-CoA: step 1/1. Its function is as follows. This protein is a component of the acetyl coenzyme A carboxylase complex; first, biotin carboxylase catalyzes the carboxylation of the carrier protein and then the transcarboxylase transfers the carboxyl group to form malonyl-CoA. The sequence is that of Biotin carboxylase 1, chloroplastic from Populus trichocarpa (Western balsam poplar).